The following is a 132-amino-acid chain: Sec-independent protein translocase protein TatB (132 aa).

A helical membrane pass occupies residues 1–21; the sequence is MFDIGFWELVLISVVGLVVLG. Residues 70–132 are disordered; it reads GMEDLSPELK…KVSAADKKAE (63 aa). Basic and acidic residues-rich tracts occupy residues 96-108 and 115-132; these read YADK…ETAK and SAEK…KKAE.

It belongs to the TatB family. The Tat system comprises two distinct complexes: a TatABC complex, containing multiple copies of TatA, TatB and TatC subunits, and a separate TatA complex, containing only TatA subunits. Substrates initially bind to the TatABC complex, which probably triggers association of the separate TatA complex to form the active translocon.

Its subcellular location is the cell inner membrane. In terms of biological role, part of the twin-arginine translocation (Tat) system that transports large folded proteins containing a characteristic twin-arginine motif in their signal peptide across membranes. Together with TatC, TatB is part of a receptor directly interacting with Tat signal peptides. TatB may form an oligomeric binding site that transiently accommodates folded Tat precursor proteins before their translocation. The chain is Sec-independent protein translocase protein TatB from Vibrio parahaemolyticus serotype O3:K6 (strain RIMD 2210633).